Here is a 751-residue protein sequence, read N- to C-terminus: Serine/threonine-protein kinase B-raf (751 aa).

Residues 1–32 (MAALSGGGGSSSGGGGGGGGGGGGGDGGGGAE) show a composition bias toward gly residues. The disordered stretch occupies residues 1–55 (MAALSGGGGSSSGGGGGGGGGGGGGDGGGGAEQGQALFNGDMEPEAGAGAAASSA). Ala2 is modified (N-acetylalanine). Over residues 46-55 (AGAGAAASSA) the composition is skewed to low complexity. The residue at position 135 (Ser135) is a Phosphoserine. The RBD domain occupies 139–211 (PIVRVFLPNK…TGEELHVEVL (73 aa)). Residues His219, Cys232, Cys235, Cys245, Cys248, His253, Cys256, and Cys264 each contribute to the Zn(2+) site. The disordered stretch occupies residues 288–440 (EASFPETALP…SSDDWEIPDG (153 aa)). Residues 297-324 (PSGSSSAPPSDSTGPQILTSPSPSKSIP) are compositionally biased toward low complexity. Position 316 is a phosphoserine (Ser316). Residues 331–346 (PADEDHRNQFGQRDRS) are compositionally biased toward basic and acidic residues. The residue at position 348 (Ser348) is a Phosphoserine. Thr356 bears the Phosphothreonine; by autocatalysis mark. At Thr379 the chain carries Phosphothreonine. A Phosphoserine modification is found at Ser382. Phosphothreonine is present on Thr384. Residues 406–432 (QRERKSSSSSSSEDRSRMKTLGRRDSS) show a composition bias toward basic and acidic residues. A phosphoserine mark is found at Ser431 and Ser432. Residues 442–702 (ITVGQRIGSG…PQILASIELL (261 aa)) form the Protein kinase domain. ATP contacts are provided by residues 448–456 (IGSGSFGTV) and Lys468. Catalysis depends on Asp561, which acts as the Proton acceptor. A Glycyl lysine isopeptide (Lys-Gly) (interchain with G-Cter in ubiquitin) cross-link involves residue Lys563. Omega-N-methylarginine; by PRMT5 is present on Arg656. Residues Ser714 and Ser735 each carry the phosphoserine modification. A Phosphothreonine; by MAPK1 modification is found at Thr738.

This sequence belongs to the protein kinase superfamily. TKL Ser/Thr protein kinase family. RAF subfamily. As to quaternary structure, monomer. Homodimer. Heterodimerizes with RAF1, and the heterodimer possesses a highly increased kinase activity compared to the respective homodimers or monomers. Heterodimerization is mitogen-regulated and enhanced by 14-3-3 proteins. MAPK1/ERK2 activation can induce a negative feedback that promotes the dissociation of the heterodimer by phosphorylating BRAF at Thr-738. Heterodimerizes (via N-terminus) with KSR1 (via N-terminus) or KSR2 (via N-terminus) in a MAP2K1-dependent manner. Interacts with MAP2K1 and MAP2K2. Found in a complex with at least BRAF, HRAS, MAP2K1, MAPK3 and RGS14. Interacts with RIT1. Interacts (via N-terminus) with RGS14 (via RBD domains); the interaction mediates the formation of a ternary complex with RAF1, a ternary complex inhibited by GNAI1. Interacts with DGKH. Interacts with PRMT5. Interacts with AKAP13, MAP2K1 and KSR1. Identified in a complex with AKAP13, KSR1 and MAP2K1. Interacts with FNIP1 and FNIP2. The cofactor is Zn(2+). Phosphorylation at Ser-348 by SGK1 inhibits its activity. Dephosphorylation of Ser-348 by the SHOC2-MRAS-PP1c (SMP) complex consisting of SHOC2, GTP-bound M-Ras/MRAS and the catalytic subunit of protein phosphatase 1 (PPP1CA, PPP1CB or PPP1CC); this relieves inactivation and stimulates kinase activity. In terms of processing, methylation by PRMT5 decreases stability and kinase activity. Post-translationally, ubiquitinated by RNF149; which leads to proteasomal degradation. Polyubiquitinated at Lys-615 in response to EGF.

Its subcellular location is the nucleus. It is found in the cytoplasm. The protein resides in the cell membrane. The catalysed reaction is L-seryl-[protein] + ATP = O-phospho-L-seryl-[protein] + ADP + H(+). It catalyses the reaction L-threonyl-[protein] + ATP = O-phospho-L-threonyl-[protein] + ADP + H(+). Its activity is regulated as follows. In quiescent cells, maintained in an inactive state via an intramolecular interaction between the protein kinase and N-terminal domains. Following mitogen-mediated cell activation, binds via its RGB domain to active HRAS (GTP-bound) which releases the inhibitory intramolecular interaction between the two domains. This allows the MAP2K1-mediated dimerization of KSR1 or KSR2, and BRAF which activates BRAF. Involved in the transduction of mitogenic signals from the cell membrane to the nucleus. Phosphorylates MAP2K1, and thereby activates the MAP kinase signal transduction pathway. Phosphorylates PFKFB2. May play a role in the postsynaptic responses of hippocampal neurons. The chain is Serine/threonine-protein kinase B-raf from Mus musculus (Mouse).